The sequence spans 315 residues: Small ribosomal subunit biogenesis GTPase RsgA (315 aa).

The CP-type G domain occupies 82 to 246 (DQFKSKVLAA…LIDSPGFQEF (165 aa)). Residues 130-133 (NKID) and 184-192 (GQSGMGKSS) each bind GTP. Positions 270, 275, 277, and 283 each coordinate Zn(2+).

It belongs to the TRAFAC class YlqF/YawG GTPase family. RsgA subfamily. Monomer. Associates with 30S ribosomal subunit, binds 16S rRNA. The cofactor is Zn(2+).

The protein resides in the cytoplasm. Its function is as follows. One of several proteins that assist in the late maturation steps of the functional core of the 30S ribosomal subunit. Helps release RbfA from mature subunits. May play a role in the assembly of ribosomal proteins into the subunit. Circularly permuted GTPase that catalyzes slow GTP hydrolysis, GTPase activity is stimulated by the 30S ribosomal subunit. The polypeptide is Small ribosomal subunit biogenesis GTPase RsgA (Ralstonia pickettii (strain 12J)).